The following is a 122-amino-acid chain: Sperm-egg fusion protein LLCFC1 (122 aa).

The signal sequence occupies residues 1 to 28 (MPPLAPQLCRAVFLVPILLLLQVKPLNG). The interval 27-51 (NGSPGPKDGSQTEKTPSADQNQEQF) is disordered. Over residues 38-49 (TEKTPSADQNQE) the composition is skewed to polar residues.

Its subcellular location is the secreted. In terms of biological role, sperm protein required for fusion of sperm with the egg membrane during fertilization. This chain is Sperm-egg fusion protein LLCFC1, found in Homo sapiens (Human).